The chain runs to 97 residues: Essential MCU regulator, mitochondrial (97 aa).

The N-terminal 37 residues, 1-37 (MAARMGVLSVAGFRAAARAGGLLARPKQSTAVVPCRT), are a transit peptide targeting the mitochondrion. Topologically, residues 38-55 (VIASSAGAILPKPEKVSF) are mitochondrial matrix. A helical transmembrane segment spans residues 56–75 (GLLRVFTVVIPFLYIGTLIS). Topologically, residues 76–97 (KNFAAVLEEHDIFVPEDDDDDD) are mitochondrial intermembrane.

It belongs to the SMDT1/EMRE family. In terms of assembly, component of the uniplex complex.

The protein localises to the mitochondrion inner membrane. Essential regulatory subunit of the mitochondrial calcium uniporter complex (uniplex), a complex that mediates calcium uptake into mitochondria. Required to bridge the calcium-sensing proteins micu1 with the calcium-conducting subunit mcu. Acts by mediating activation of mcu and retention of micu1 to the mcu pore, in order to ensure tight regulation of the uniplex complex and appropriate responses to intracellular calcium signaling. The sequence is that of Essential MCU regulator, mitochondrial from Xenopus laevis (African clawed frog).